The primary structure comprises 480 residues: V-type ATP synthase beta chain 2 (480 aa).

It belongs to the ATPase alpha/beta chains family.

Produces ATP from ADP in the presence of a proton gradient across the membrane. The V-type beta chain is a regulatory subunit. The chain is V-type ATP synthase beta chain 2 (atpB2) from Treponema pallidum (strain Nichols).